A 214-amino-acid chain; its full sequence is Ribosomal RNA small subunit methyltransferase G (214 aa).

Residues Gly72, Phe77, 125-126 (VE), and Arg141 contribute to the S-adenosyl-L-methionine site.

The protein belongs to the methyltransferase superfamily. RNA methyltransferase RsmG family.

It is found in the cytoplasm. It catalyses the reaction guanosine(527) in 16S rRNA + S-adenosyl-L-methionine = N(7)-methylguanosine(527) in 16S rRNA + S-adenosyl-L-homocysteine. Functionally, specifically methylates the N7 position of guanine in position 527 of 16S rRNA. The sequence is that of Ribosomal RNA small subunit methyltransferase G from Sinorhizobium fredii (strain NBRC 101917 / NGR234).